The sequence spans 385 residues: Mannitol-1-phosphate 5-dehydrogenase (385 aa).

4–15 serves as a coordination point for NAD(+); that stretch reads AVHFGAGNIGRG.

Belongs to the mannitol dehydrogenase family.

The enzyme catalyses D-mannitol 1-phosphate + NAD(+) = beta-D-fructose 6-phosphate + NADH + H(+). In Lactococcus lactis subsp. lactis (strain IL1403) (Streptococcus lactis), this protein is Mannitol-1-phosphate 5-dehydrogenase.